Consider the following 483-residue polypeptide: MFS-type transporter ppzB (483 aa).

Helical transmembrane passes span F18–L38, A62–A82, M96–V116, I149–V169, and A178–I198. N219 is a glycosylation site (N-linked (GlcNAc...) asparagine). A run of 6 helical transmembrane segments spans residues L281–P301, F310–G330, A344–E364, V374–P394, F424–F444, and V453–V473.

The protein belongs to the major facilitator superfamily. TCR/Tet family.

It localises to the membrane. Functionally, MFS-type transporter; part of the gene cluster that mediates the biosynthesis of pyrrolopyrazines, secondary metabolites showing insecticidal activity. Probably involved in the secretion of peramine and other pyrrolopyrazines. The protein is MFS-type transporter ppzB of Metarhizium rileyi (strain RCEF 4871) (Nomuraea rileyi).